The chain runs to 94 residues: Co-chaperonin GroES (94 aa).

Belongs to the GroES chaperonin family. As to quaternary structure, heptamer of 7 subunits arranged in a ring. Interacts with the chaperonin GroEL.

The protein localises to the cytoplasm. In terms of biological role, together with the chaperonin GroEL, plays an essential role in assisting protein folding. The GroEL-GroES system forms a nano-cage that allows encapsulation of the non-native substrate proteins and provides a physical environment optimized to promote and accelerate protein folding. GroES binds to the apical surface of the GroEL ring, thereby capping the opening of the GroEL channel. The polypeptide is Co-chaperonin GroES (Streptococcus agalactiae serotype III (strain NEM316)).